The primary structure comprises 505 residues: Apolipoprotein N-acyltransferase (505 aa).

6 helical membrane-spanning segments follow: residues 23 to 43 (LLAL…AVLY), 58 to 78 (GWWF…VSMN), 85 to 105 (PLLA…FFAL), 125 to 145 (LCFA…LTGF), 162 to 182 (LAPL…AALL), and 192 to 212 (PSFL…GLAL). One can recognise a CN hydrolase domain in the interval 230–469 (IQGNVEQDLK…QAVLYGEVVP (240 aa)). The Proton acceptor role is filled by glutamate 269. Lysine 329 is an active-site residue. Residue cysteine 381 is the Nucleophile of the active site. Residues 482 to 502 (WPLAIVCALLLGWALLAGRIA) traverse the membrane as a helical segment.

Belongs to the CN hydrolase family. Apolipoprotein N-acyltransferase subfamily.

It is found in the cell inner membrane. It catalyses the reaction N-terminal S-1,2-diacyl-sn-glyceryl-L-cysteinyl-[lipoprotein] + a glycerophospholipid = N-acyl-S-1,2-diacyl-sn-glyceryl-L-cysteinyl-[lipoprotein] + a 2-acyl-sn-glycero-3-phospholipid + H(+). The protein operates within protein modification; lipoprotein biosynthesis (N-acyl transfer). Functionally, catalyzes the phospholipid dependent N-acylation of the N-terminal cysteine of apolipoprotein, the last step in lipoprotein maturation. This Pseudomonas putida (strain ATCC 47054 / DSM 6125 / CFBP 8728 / NCIMB 11950 / KT2440) protein is Apolipoprotein N-acyltransferase.